A 659-amino-acid polypeptide reads, in one-letter code: tRNA (guanine(26)-N(2))-dimethyltransferase (659 aa).

Residues methionine 1–phenylalanine 23 constitute a mitochondrion transit peptide. The region spanning threonine 55–methionine 499 is the Trm1 methyltransferase domain. S-adenosyl-L-methionine is bound at residue arginine 82. Phosphoserine is present on serine 120. Positions 166 and 184 each coordinate S-adenosyl-L-methionine. 4 residues coordinate Zn(2+): cysteine 348, cysteine 351, cysteine 384, and cysteine 387. Serine 517 carries the post-translational modification Phosphoserine. Disordered regions lie at residues glutamate 537–glutamate 578 and arginine 616–aspartate 659. The short motif at serine 543–alanine 575 is the Nuclear localization signal element. A C3H1-type zinc finger spans residues arginine 600–proline 627. Serine 625 is modified (phosphoserine). Residues threonine 628 and threonine 646 each carry the phosphothreonine modification.

The protein belongs to the class I-like SAM-binding methyltransferase superfamily. Trm1 family. (Microbial infection) Cleaved between Gln-530 and Ala-531 by the 3C-like proteinase nsp5 from human coronavirus SARS-CoV-2, leading to its inactivation.

The protein resides in the mitochondrion. Its subcellular location is the nucleus. The protein localises to the cytoplasm. The catalysed reaction is guanosine(26) in tRNA + 2 S-adenosyl-L-methionine = N(2)-dimethylguanosine(26) in tRNA + 2 S-adenosyl-L-homocysteine + 2 H(+). In terms of biological role, dimethylates a single guanine residue at position 26 of most nuclear- and mitochondrial-encoded tRNAs using S-adenosyl-L-methionine as donor of the methyl groups. tRNA guanine(26)-dimethylation is required for redox homeostasis and ensure proper cellular proliferation and oxidative stress survival. The protein is tRNA (guanine(26)-N(2))-dimethyltransferase of Homo sapiens (Human).